A 411-amino-acid chain; its full sequence is MTDGPIKVNSEIGALKTVLLKRPGKELENLVPDYLDGLLFDDIPYLEVAQKEHDHFAQVLREEGVEVLYLEKLAAESIENPQVRSEFIDDVLAESKKTILGHEEEIKALFATLSNQELVDKIMSGVRKEEINPKCTHLVEYMDDKYPFYLDPMPNLYFTRDPQASIGHGITINRMFWRARRRESIFIQYIVKHHPRFKDANIPIWLDRDCPFNIEGGDELVLSKEVLAIGVSERTSAQAIEKLARRIFENPQATFKKVVAIEIPTSRTFMHLDTVFTMIDYDKFTIHSAILKAEGNMNIFIIEYDDVNKDISIKQSSHLKDTLEDVLGIDDIQFIPTGNGDVIDGAREQWNDGSNTLCIRPGVVVTYDRNYVSNDLLRQKGIKVIEISGSELVRGRGGPRCMSQPLFREDI.

The active-site Amidino-cysteine intermediate is C401.

This sequence belongs to the arginine deiminase family.

It is found in the cytoplasm. It catalyses the reaction L-arginine + H2O = L-citrulline + NH4(+). It participates in amino-acid degradation; L-arginine degradation via ADI pathway; carbamoyl phosphate from L-arginine: step 1/2. The sequence is that of Arginine deiminase from Staphylococcus aureus (strain MRSA252).